We begin with the raw amino-acid sequence, 524 residues long: Cytochrome P450 CYP749A22 (524 aa).

Residues 12–32 traverse the membrane as a helical segment; the sequence is TPILFQFLLSSLCVFLLFVFI. Cys472 contributes to the heme binding site.

This sequence belongs to the cytochrome P450 family. Heme serves as cofactor.

It localises to the membrane. Its function is as follows. Probable heme-thiolate monooxygenase. The polypeptide is Cytochrome P450 CYP749A22 (Panax ginseng (Korean ginseng)).